The following is a 155-amino-acid chain: Small ribosomal subunit protein uS7 (155 aa).

This sequence belongs to the universal ribosomal protein uS7 family. Part of the 30S ribosomal subunit. Contacts proteins S9 and S11.

One of the primary rRNA binding proteins, it binds directly to 16S rRNA where it nucleates assembly of the head domain of the 30S subunit. Is located at the subunit interface close to the decoding center, probably blocks exit of the E-site tRNA. This chain is Small ribosomal subunit protein uS7, found in Xanthomonas campestris pv. campestris (strain 8004).